We begin with the raw amino-acid sequence, 227 residues long: Phosphoglycolate phosphatase (227 aa).

D13 functions as the Nucleophile in the catalytic mechanism. D13, D15, and D176 together coordinate Mg(2+).

This sequence belongs to the HAD-like hydrolase superfamily. CbbY/CbbZ/Gph/YieH family. Mg(2+) is required as a cofactor.

It carries out the reaction 2-phosphoglycolate + H2O = glycolate + phosphate. It participates in organic acid metabolism; glycolate biosynthesis; glycolate from 2-phosphoglycolate: step 1/1. Specifically catalyzes the dephosphorylation of 2-phosphoglycolate. Is involved in the dissimilation of the intracellular 2-phosphoglycolate formed during the DNA repair of 3'-phosphoglycolate ends, a major class of DNA lesions induced by oxidative stress. This chain is Phosphoglycolate phosphatase, found in Nitrosospira multiformis (strain ATCC 25196 / NCIMB 11849 / C 71).